The following is a 147-amino-acid chain: Large ribosomal subunit protein uL15 (147 aa).

Residues 1-20 (MTMHLNDLKPADGARTERTR) are compositionally biased toward basic and acidic residues. The tract at residues 1–64 (MTMHLNDLKP…GGQTPMQRRL (64 aa)) is disordered. The segment covering 23–33 (RGIGSGLGKTC) has biased composition (gly residues). The segment covering 34–47 (GRGHKGSFARKGGG) has biased composition (basic residues).

The protein belongs to the universal ribosomal protein uL15 family. As to quaternary structure, part of the 50S ribosomal subunit.

In terms of biological role, binds to the 23S rRNA. In Xanthomonas campestris pv. campestris (strain 8004), this protein is Large ribosomal subunit protein uL15.